The following is a 602-amino-acid chain: Probable translation initiation factor IF-2 (602 aa).

A tr-type G domain is found at Leu9–Lys229. The segment at Gly18–Thr25 is G1. Position 18–25 (Gly18–Thr25) interacts with GTP. Residues Glu43 to Glu47 form a G2 region. Positions Asp82 to Gly85 are G3. GTP is bound by residues Asp82 to His86 and Asn136 to Asp139. The tract at residues Asn136–Asp139 is G4. The interval Ser204–Lys206 is G5.

This sequence belongs to the TRAFAC class translation factor GTPase superfamily. Classic translation factor GTPase family. IF-2 subfamily.

In terms of biological role, function in general translation initiation by promoting the binding of the formylmethionine-tRNA to ribosomes. Seems to function along with eIF-2. The sequence is that of Probable translation initiation factor IF-2 (infB) from Sulfolobus acidocaldarius (strain ATCC 33909 / DSM 639 / JCM 8929 / NBRC 15157 / NCIMB 11770).